The chain runs to 843 residues: Protein P (843 aa).

A terminal protein domain (TP) region spans residues 1–177; it reads MPLSYQHFRR…FCGSPYSWEQ (177 aa). Residues 178–346 are spacer; the sequence is ELQHGSTSLN…YCLSHIINLL (169 aa). The disordered stretch occupies residues 249-301; sequence TPTRWPSGVEPSGTGHSDNLATRSTSRFHQSEVRKETNPSLSTSKGHTSTGHA. Composition is skewed to polar residues over residues 262–276 and 286–299; these read TGHS…TSRF and NPSL…TSTG. The polymerase/reverse transcriptase domain (RT) stretch occupies residues 347–690; the sequence is EDWGPCYEHG…YMNLYPVARQ (344 aa). In terms of domain architecture, Reverse transcriptase spans 357–600; sequence EHHIRTPRTP…YSLHFMGYII (244 aa). Mg(2+) is bound by residues aspartate 429, aspartate 551, and aspartate 552.

The protein belongs to the hepadnaviridae P protein family.

It carries out the reaction DNA(n) + a 2'-deoxyribonucleoside 5'-triphosphate = DNA(n+1) + diphosphate. It catalyses the reaction Endonucleolytic cleavage to 5'-phosphomonoester.. With respect to regulation, activated by host HSP70 and HSP40 in vitro to be able to bind the epsilon loop of the pgRNA. Because deletion of the RNase H region renders the protein partly chaperone-independent, the chaperones may be needed indirectly to relieve occlusion of the RNA-binding site by this domain. Inhibited by several reverse-transcriptase inhibitors: Lamivudine, Adefovir and Entecavir. Functionally, multifunctional enzyme that converts the viral RNA genome into dsDNA in viral cytoplasmic capsids. This enzyme displays a DNA polymerase activity that can copy either DNA or RNA templates, and a ribonuclease H (RNase H) activity that cleaves the RNA strand of RNA-DNA heteroduplexes in a partially processive 3'- to 5'-endonucleasic mode. Neo-synthesized pregenomic RNA (pgRNA) are encapsidated together with the P protein, and reverse-transcribed inside the nucleocapsid. Initiation of reverse-transcription occurs first by binding the epsilon loop on the pgRNA genome, and is initiated by protein priming, thereby the 5'-end of (-)DNA is covalently linked to P protein. Partial (+)DNA is synthesized from the (-)DNA template and generates the relaxed circular DNA (RC-DNA) genome. After budding and infection, the RC-DNA migrates in the nucleus, and is converted into a plasmid-like covalently closed circular DNA (cccDNA). The activity of P protein does not seem to be necessary for cccDNA generation, and is presumably released from (+)DNA by host nuclear DNA repair machinery. The protein is Protein P of Homo sapiens (Human).